A 205-amino-acid polypeptide reads, in one-letter code: GTP cyclohydrolase-2 (205 aa).

49–53 (RIHSE) contributes to the GTP binding site. 3 residues coordinate Zn(2+): C54, C65, and C67. GTP-binding positions include Q70, 92–94 (EGR), and T114. The active-site Proton acceptor is the D126. The Nucleophile role is filled by R128. GTP is bound by residues T149 and K154.

It belongs to the GTP cyclohydrolase II family. Zn(2+) serves as cofactor.

The enzyme catalyses GTP + 4 H2O = 2,5-diamino-6-hydroxy-4-(5-phosphoribosylamino)-pyrimidine + formate + 2 phosphate + 3 H(+). It participates in cofactor biosynthesis; riboflavin biosynthesis; 5-amino-6-(D-ribitylamino)uracil from GTP: step 1/4. In terms of biological role, catalyzes the conversion of GTP to 2,5-diamino-6-ribosylamino-4(3H)-pyrimidinone 5'-phosphate (DARP), formate and pyrophosphate. The sequence is that of GTP cyclohydrolase-2 from Shewanella amazonensis (strain ATCC BAA-1098 / SB2B).